The chain runs to 119 residues: Large ribosomal subunit protein bL17 (119 aa).

The protein belongs to the bacterial ribosomal protein bL17 family. In terms of assembly, part of the 50S ribosomal subunit. Contacts protein L32.

In Psychrobacter arcticus (strain DSM 17307 / VKM B-2377 / 273-4), this protein is Large ribosomal subunit protein bL17.